The sequence spans 485 residues: MSPQTETKASVGFKAGVKDYKLTYYTPEYETKDTDILAAFRVTPQPGVPPEEAGAAVAAESSTGTWTTVWTDGLTSLDRYKGRCYGLEPVPGEDNQFIAYVAYPLDLFEEGSVTNMFTSIVGNVFGFKALRALRLEDLRIPTAYVKTFDGPPHGIQVERDKLNKYGRPLLGCTIKPKLGLSAKNYGRACYECLRGGLDFTKDDENVNSQPFMRWRDRFLFCAEAIYKAQAETGEIKGHYLNATAGNCEDMMKRAVFARELGVPIVMHDYLTGGFTANTSLSQYCRDNGLLLHIHRAMHAVIDRQKNHGMHFRVLAKALRMSGGDHIHSGTVVGKLEGEREITLGFVDLLRDDFIEKDRSRGIYFTQDWVSLPGVLPVASGGIHVWHMPALTEIFGDDSVLQFGGGTLGHPWGNAPGAVANRVALEACVQARNEGRDLATEGNEIIREATKWSPELAAACEVWKEIKFEFQAMDTLDTDKDKDKKR.

Residues 1 to 2 (MS) constitute a propeptide that is removed on maturation. Residue proline 3 is modified to N-acetylproline. Position 14 is an N6,N6,N6-trimethyllysine (lysine 14). Residues asparagine 123 and threonine 173 each contribute to the substrate site. The active-site Proton acceptor is the lysine 175. Lysine 177 contributes to the substrate binding site. 3 residues coordinate Mg(2+): lysine 201, aspartate 203, and glutamate 204. Position 201 is an N6-carboxylysine (lysine 201). Histidine 294 serves as the catalytic Proton acceptor. Residues arginine 295, histidine 327, and serine 379 each coordinate substrate.

This sequence belongs to the RuBisCO large chain family. Type I subfamily. In terms of assembly, heterohexadecamer of 8 large chains and 8 small chains; disulfide-linked. The disulfide link is formed within the large subunit homodimers. It depends on Mg(2+) as a cofactor. The disulfide bond which can form in the large chain dimeric partners within the hexadecamer appears to be associated with oxidative stress and protein turnover.

The protein localises to the plastid. It localises to the chloroplast. The catalysed reaction is 2 (2R)-3-phosphoglycerate + 2 H(+) = D-ribulose 1,5-bisphosphate + CO2 + H2O. It carries out the reaction D-ribulose 1,5-bisphosphate + O2 = 2-phosphoglycolate + (2R)-3-phosphoglycerate + 2 H(+). RuBisCO catalyzes two reactions: the carboxylation of D-ribulose 1,5-bisphosphate, the primary event in carbon dioxide fixation, as well as the oxidative fragmentation of the pentose substrate in the photorespiration process. Both reactions occur simultaneously and in competition at the same active site. This is Ribulose bisphosphate carboxylase large chain from Helianthus annuus (Common sunflower).